A 98-amino-acid chain; its full sequence is Essential MCU regulator, mitochondrial (98 aa).

The chain crosses the membrane as a helical span at residues 52-72 (ITPFGLFGIIATVIPGLLIGA).

Belongs to the SMDT1/EMRE family.

It localises to the mitochondrion inner membrane. In terms of biological role, essential regulatory subunit of the mitochondrial calcium uniporter (mcu) channel, a protein that mediates calcium uptake into mitochondria. The chain is Essential MCU regulator, mitochondrial from Anopheles gambiae (African malaria mosquito).